The sequence spans 448 residues: Oxysterol-binding protein homolog 6 (448 aa).

The segment at 1–42 (MGSKKLTVGSDSHRLSKSSFSSNKSSHSATKDQPIDTDDIDE) is disordered. Serine 16 carries the post-translational modification Phosphoserine. Low complexity predominate over residues 17-28 (KSSFSSNKSSHS). The OSBP-related domain (ORD) stretch occupies residues 54–391 (IISQLRPGCD…PGEDLDYCIY (338 aa)). A 1,2-diacyl-sn-glycero-3-phospho-(1D-myo-inositol 4-phosphate) is bound by residues 64 to 69 (LTRITL), 126 to 129 (KPLN), and 157 to 158 (HH). A 1,2-diacyl-sn-glycero-3-phospho-L-serine contacts are provided by residues 64–69 (LTRITL) and asparagine 129. Serine 183 serves as a coordination point for a 1,2-diacyl-sn-glycero-3-phospho-L-serine. The a 1,2-diacyl-sn-glycero-3-phospho-(1D-myo-inositol 4-phosphate) site is built by lysine 351, glutamate 355, and arginine 359.

The protein belongs to the OSBP family. As to quaternary structure, interacts with the AAA ATPase VPS4; regulates OSH6 membrane association. VPS4 is required for membrane dissociation of OSH6.

Its subcellular location is the cytoplasm. It localises to the cell membrane. The protein localises to the endoplasmic reticulum membrane. The catalysed reaction is a 1,2-diacyl-sn-glycero-3-phospho-L-serine(in) = a 1,2-diacyl-sn-glycero-3-phospho-L-serine(out). In terms of biological role, lipid transport protein (LTP) involved in non-vesicular transfer of lipids between membranes. Functions in phosphoinositide-coupled directional transport of various lipids by carrying the lipid molecule in a hydrophobic pocket and transferring it between membranes through the cytosol. Involved in maintenance of intracellular sterol distribution and homeostasis. Catalyzes the lipid countertransport between the endoplasmic reticulum (ER) and the plasma membrane (PM). Specifically exchanges phosphatidylserine (PS) with phosphatidylinositol 4-phosphate (PI4P), delivering phosphatidylserine to the PM in exchange for PI4P, which is delivered to the ER-localized PI4P phosphatase SAC1 for degradation. Thus, by maintaining a PI4P gradient at the ER/PM interface, SAC1 drives PS transport. Binds phosphatidylserine and PI4P in a mutually exclusive manner. Also binds phosphatidic acid (PA). The chain is Oxysterol-binding protein homolog 6 from Saccharomyces cerevisiae (strain ATCC 204508 / S288c) (Baker's yeast).